The chain runs to 370 residues: Protein SHI RELATED SEQUENCE 1 (370 aa).

A disordered region spans residues 1 to 37 (MAGFFSLDGGGGGGGGGGNNQEDHRSNTNPPPPVSEA). Gly residues predominate over residues 8 to 19 (DGGGGGGGGGGN). Zn(2+)-binding residues include cysteine 144, cysteine 147, cysteine 155, cysteine 160, cysteine 164, and cysteine 171. The zn(2)-C6 fungal-type; degenerate DNA-binding region spans 144–171 (CQDCGNQAKKDCSHMRCRTCCKSRGFEC). The short motif at 271–274 (IGGH) is the Required for homo- and heterodimerization element.

It belongs to the SHI protein family. In terms of assembly, forms homodimers and heterodimers with LRP1. In terms of tissue distribution, expressed in flowers, seeds and seedlings.

The protein resides in the nucleus. In terms of biological role, transcription activator that binds DNA on 5'-ACTCTAC-3' and promotes auxin homeostasis-regulating gene expression (e.g. YUC genes), as well as genes affecting stamen development, cell expansion and timing of flowering. Synergistically with other SHI-related proteins, regulates gynoecium, stamen and leaf development in a dose-dependent manner, controlling apical-basal patterning. Promotes style and stigma formation, and influences vascular development during gynoecium development. May also have a role in the formation and/or maintenance of the shoot apical meristem (SAM). The polypeptide is Protein SHI RELATED SEQUENCE 1 (SRS1) (Arabidopsis thaliana (Mouse-ear cress)).